A 219-amino-acid chain; its full sequence is Ras-related protein Rab-3B (219 aa).

N-acetylalanine is present on Ala-2. Positions 31, 32, 33, 34, 35, 36, 37, 49, and 53 each coordinate GTP. Residue Ser-32 coordinates GDP. 4 residues coordinate GDP: Gly-34, Lys-35, Thr-36, and Ser-37. Thr-36 contacts Mg(2+). Residues 45 to 58 (DTFTPAFVSTVGID) carry the Switch 1 motif. Residues Thr-54 and Asp-77 each coordinate Mg(2+). Positions 78–96 (TAGQERYRTITTAYYRGAM) match the Switch 2 motif. Gly-80 serves as a coordination point for GTP. Thr-86 carries the post-translational modification Phosphothreonine; by LRRK2. GTP-binding residues include Asn-135, Lys-136, and Asp-138. GDP contacts are provided by Asn-135, Lys-136, Asp-138, Met-139, Ala-166, and Lys-167. Residues Ala-166 and Lys-167 each contribute to the GTP site. Ser-188 and Ser-190 each carry phosphoserine. S-geranylgeranyl cysteine attachment occurs at residues Cys-217 and Cys-219. Cys-219 bears the Cysteine methyl ester mark.

It belongs to the small GTPase superfamily. Rab family. As to quaternary structure, interacts with RIMS1, RIMS2, RPH3A and RPH3AL. The GTP-bound form interacts with GAS8/DRC4 (via coiled-coil domains). The GTP-bound form interacts with REP15. Interacts with GDI2, CHM and CHML; phosphorylation at Thr-86 disrupts these interactions. Interacts with MADD (via uDENN domain); the GTP-bound form is preferred for interaction. Requires Mg(2+) as cofactor. Post-translationally, phosphorylation of Thr-86 in the switch II region by LRRK2 prevents the association of RAB regulatory proteins, including CHM, CHML and RAB GDP dissociation inhibitor GDI2.

It localises to the cell membrane. The protein resides in the golgi apparatus. It carries out the reaction GTP + H2O = GDP + phosphate + H(+). Regulated by guanine nucleotide exchange factors (GEFs) which promote the exchange of bound GDP for free GTP. Regulated by GTPase activating proteins (GAPs) which increase the GTP hydrolysis activity. Inhibited by GDP dissociation inhibitors (GDIs) which prevent Rab-GDP dissociation. Functionally, the small GTPases Rab are key regulators of intracellular membrane trafficking, from the formation of transport vesicles to their fusion with membranes. Rabs cycle between an inactive GDP-bound form and an active GTP-bound form that is able to recruit to membranes different sets of downstream effectors directly responsible for vesicle formation, movement, tethering and fusion. The protein is Ras-related protein Rab-3B of Homo sapiens (Human).